The chain runs to 182 residues: Carbonic anhydrase (182 aa).

Residues histidine 64, histidine 81, and histidine 86 each contribute to the Mg(2+) site.

This sequence belongs to the gamma-class carbonic anhydrase family. Homotrimer. The cofactor is Mg(2+). Requires Zn(2+) as cofactor.

The enzyme catalyses hydrogencarbonate + H(+) = CO2 + H2O. In terms of biological role, reversible hydration of carbon dioxide. In Geobacillus kaustophilus (strain HTA426), this protein is Carbonic anhydrase.